The sequence spans 438 residues: Gamma-glutamyl phosphate reductase (438 aa).

The protein belongs to the gamma-glutamyl phosphate reductase family.

It localises to the cytoplasm. The enzyme catalyses L-glutamate 5-semialdehyde + phosphate + NADP(+) = L-glutamyl 5-phosphate + NADPH + H(+). Its pathway is amino-acid biosynthesis; L-proline biosynthesis; L-glutamate 5-semialdehyde from L-glutamate: step 2/2. In terms of biological role, catalyzes the NADPH-dependent reduction of L-glutamate 5-phosphate into L-glutamate 5-semialdehyde and phosphate. The product spontaneously undergoes cyclization to form 1-pyrroline-5-carboxylate. The chain is Gamma-glutamyl phosphate reductase from Prochlorococcus marinus (strain MIT 9303).